A 488-amino-acid chain; its full sequence is Glutamyl-tRNA(Gln) amidotransferase subunit A (488 aa).

Active-site charge relay system residues include Lys-76 and Ser-151. Catalysis depends on Ser-175, which acts as the Acyl-ester intermediate.

It belongs to the amidase family. GatA subfamily. Heterotrimer of A, B and C subunits.

The enzyme catalyses L-glutamyl-tRNA(Gln) + L-glutamine + ATP + H2O = L-glutaminyl-tRNA(Gln) + L-glutamate + ADP + phosphate + H(+). Functionally, allows the formation of correctly charged Gln-tRNA(Gln) through the transamidation of misacylated Glu-tRNA(Gln) in organisms which lack glutaminyl-tRNA synthetase. The reaction takes place in the presence of glutamine and ATP through an activated gamma-phospho-Glu-tRNA(Gln). The sequence is that of Glutamyl-tRNA(Gln) amidotransferase subunit A from Symbiobacterium thermophilum (strain DSM 24528 / JCM 14929 / IAM 14863 / T).